The primary structure comprises 880 residues: MICHVLVIFTILVSAVVDATASYEPTDVFLINCGDTSNNMDYSGRNWTTENPKFMSSNAVDDASFTSSASYQESGIPQVPYLKARIFRYDFTYSFPVSPGWKFLRLYFYPTRYGSDFDAVKSFFSVNVNRFTLLHNFSVKASIPESSSLIKEFIVPVNQTLDLTFTPSPNSLAFVNGIEIISMPDRFYSKGGFDDVVRNVGRDVDFEIDNSTAFETVYRVNVGGKVVGDVGDSGMFRRWLSDEGFLLGINSGAIPNITGVKINYTDKTPAYVAPEDVYTTCRLMGNKDSPELNLNFNLTWLFEVDAGFAYIVRLHFCETQPEVNKTGDRVFSIFFGYQLAMREMDVFRLSGGFRLPMYLDFKVLVDADGTSQRPSLRVDLTPYKEDYPTYYDAILSGVEILKLSNSDGNLAGLNPIPQLSPPPQSITPLKGKGKSSHVLPIIIAVVGSAVALAFFVLVVVLVVMKRKKKSNESSVDTTNKPSTNSSWGPLLHGTGSTNTKSASSLPSDLCRRFSIYEIKSATNDFEEKLIIGVGGFGSVYKGRIDGGATLVAVKRLEITSNQGAKEFDTELEMLSKLRHVHLVSLIGYCDDDNEMVLVYEYMPHGTLKDHLFRRDKASDPPLSWKRRLEICIGAARGLQYLHTGAKYTIIHRDIKTTNILLDENFVAKVSDFGLSRVGPTSASQTHVSTVVKGTFGYLDPEYYRRQILTEKSDVYSFGVVLLEVLCCRPIRMQSVPPEQADLIRWVKSNFNKRTVDQIIDSDLTADITSTSMEKFCEIAIRCVQDRGMERPPMNDVVWALEFALQLHETAKKKNDNVESLDLMPSGEVGTTTDGEDDLFSRTTGHVGKSTTTDDSVLVVGDERSGSSWGVFSEINEPKAR.

Residues 1 to 21 (MICHVLVIFTILVSAVVDATA) form the signal peptide. Residues 22–440 (SYEPTDVFLI…GKGKSSHVLP (419 aa)) are Extracellular-facing. Residues N46, N136, N158, N210, N256, N263, N297, and N324 are each glycosylated (N-linked (GlcNAc...) asparagine). The chain crosses the membrane as a helical span at residues 441 to 461 (IIIAVVGSAVALAFFVLVVVL). At 462–880 (VVMKRKKKSN…FSEINEPKAR (419 aa)) the chain is on the cytoplasmic side. Residues 471-505 (NESSVDTTNKPSTNSSWGPLLHGTGSTNTKSASSL) form a disordered region. Composition is skewed to polar residues over residues 472–487 (ESSVDTTNKPSTNSSW) and 494–505 (TGSTNTKSASSL). The Protein kinase domain occupies 525–810 (FEEKLIIGVG…EFALQLHETA (286 aa)). ATP-binding positions include 531–539 (IGVGGFGSV) and K554. The active-site Proton acceptor is D653. The interval 820 to 846 (LDLMPSGEVGTTTDGEDDLFSRTTGHV) is disordered.

Belongs to the protein kinase superfamily. Ser/Thr protein kinase family.

The protein localises to the membrane. In Arabidopsis thaliana (Mouse-ear cress), this protein is Probable receptor-like protein kinase At5g38990.